We begin with the raw amino-acid sequence, 1088 residues long: DNA mismatch repair protein MutS (1088 aa).

The tract at residues 498-579 is disordered; the sequence is PLDGITPPDD…SFEMPSLHGH (82 aa). A compositionally biased stretch (acidic residues) spans 537–546; it reads DLFDEEEEQE. 816 to 823 is a binding site for ATP; sequence GPNMSGKS. The tract at residues 1000–1048 is disordered; the sequence is LERRAPRSTPQPAPERTEERPAAGRPTARSHSAARGDPPRAPDGQLSLF.

Belongs to the DNA mismatch repair MutS family.

Functionally, this protein is involved in the repair of mismatches in DNA. It is possible that it carries out the mismatch recognition step. This protein has a weak ATPase activity. This chain is DNA mismatch repair protein MutS, found in Roseiflexus castenholzii (strain DSM 13941 / HLO8).